A 115-amino-acid chain; its full sequence is Nitrogenase-stabilizing/protective protein NifW (115 aa).

The protein belongs to the NifW family. In terms of assembly, homotrimer; associates with NifD.

Its function is as follows. May protect the nitrogenase Fe-Mo protein from oxidative damage. In Rhodopseudomonas palustris (strain BisB18), this protein is Nitrogenase-stabilizing/protective protein NifW.